Here is a 125-residue protein sequence, read N- to C-terminus: Protein ApaG (125 aa).

One can recognise an ApaG domain in the interval 1-125 (MFTSSKVAIQ…FRLAIPTLIN (125 aa)).

In Proteus mirabilis (strain HI4320), this protein is Protein ApaG.